The sequence spans 353 residues: Putrescine N-methyltransferase 2 (353 aa).

The interval 15-50 (KSGAIPMNGHHNGTSKHQNGHKNGTSEQQNGTISLD) is disordered. Polar residues predominate over residues 25-50 (HNGTSKHQNGHKNGTSEQQNGTISLD). Positions 64 to 301 (PGWFSEFSAL…GVIGYMLCST (238 aa)) constitute a PABS domain. S-adenosyl-L-methionine contacts are provided by residues Gln-95, Glu-170, and 201-202 (DG). Residue Asp-220 is the Proton acceptor of the active site. Tyr-289 provides a ligand contact to S-adenosyl-L-methionine.

It belongs to the class I-like SAM-binding methyltransferase superfamily. Putrescine methyltransferase family. As to expression, predominantly expressed in roots.

The enzyme catalyses putrescine + S-adenosyl-L-methionine = N-methylputrescine + S-adenosyl-L-homocysteine + H(+). Its pathway is alkaloid biosynthesis; nicotine biosynthesis. In terms of biological role, involved in the biosynthesis of pyridine alkaloid natural products, leading mainly to the production of anabasine, anatabine, nicotine and nornicotine, effective deterrents against herbivores with antiparasitic and pesticide properties (neurotoxins); nornicotine serves as the precursor in the synthesis of the carcinogen compound N'-nitrosonornicotine (NNN). Methyltransferase that mediates the conversion of putrescine to N-methylputrescine. Promotes leaves ripening. The protein is Putrescine N-methyltransferase 2 of Nicotiana tabacum (Common tobacco).